A 207-amino-acid chain; its full sequence is Ribonuclease HII (207 aa).

In terms of domain architecture, RNase H type-2 spans 5 to 207; it reads PLIIGVDEAG…APVRALLRPC (203 aa). A divalent metal cation contacts are provided by Asp-11, Glu-12, and Asp-117.

Belongs to the RNase HII family. Mn(2+) serves as cofactor. The cofactor is Mg(2+).

It is found in the cytoplasm. It carries out the reaction Endonucleolytic cleavage to 5'-phosphomonoester.. Its function is as follows. Endonuclease that specifically degrades the RNA of RNA-DNA hybrids. The chain is Ribonuclease HII from Hyphomonas neptunium (strain ATCC 15444).